A 491-amino-acid polypeptide reads, in one-letter code: UDP-N-acetylmuramoyl-L-alanyl-D-glutamate--2,6-diaminopimelate ligase (491 aa).

Residue serine 30 coordinates UDP-N-acetyl-alpha-D-muramoyl-L-alanyl-D-glutamate. ATP is bound at residue 108-114; it reads GTNGKTT. Residues asparagine 149, 150–151, serine 177, and arginine 185 contribute to the UDP-N-acetyl-alpha-D-muramoyl-L-alanyl-D-glutamate site; that span reads TT. At lysine 217 the chain carries N6-carboxylysine. Residues arginine 383, 407 to 410, glycine 457, and glutamate 461 each bind meso-2,6-diaminopimelate; that span reads DNPR. The Meso-diaminopimelate recognition motif signature appears at 407–410; sequence DNPR.

It belongs to the MurCDEF family. MurE subfamily. Requires Mg(2+) as cofactor. Carboxylation is probably crucial for Mg(2+) binding and, consequently, for the gamma-phosphate positioning of ATP.

The protein resides in the cytoplasm. It catalyses the reaction UDP-N-acetyl-alpha-D-muramoyl-L-alanyl-D-glutamate + meso-2,6-diaminopimelate + ATP = UDP-N-acetyl-alpha-D-muramoyl-L-alanyl-gamma-D-glutamyl-meso-2,6-diaminopimelate + ADP + phosphate + H(+). It functions in the pathway cell wall biogenesis; peptidoglycan biosynthesis. Its function is as follows. Catalyzes the addition of meso-diaminopimelic acid to the nucleotide precursor UDP-N-acetylmuramoyl-L-alanyl-D-glutamate (UMAG) in the biosynthesis of bacterial cell-wall peptidoglycan. In Bacillus cereus (strain ATCC 14579 / DSM 31 / CCUG 7414 / JCM 2152 / NBRC 15305 / NCIMB 9373 / NCTC 2599 / NRRL B-3711), this protein is UDP-N-acetylmuramoyl-L-alanyl-D-glutamate--2,6-diaminopimelate ligase.